We begin with the raw amino-acid sequence, 107 residues long: Proteinase inhibitor I-B (107 aa).

The first 22 residues, 1–22 (MVKFAHVVAFLLLASLFQPLTA), serve as a signal peptide directing secretion. A propeptide spanning residues 23–39 (RDLEINVLQLDVSQSGC) is cleaved from the precursor.

It belongs to the protease inhibitor I13 (potato type I serine protease inhibitor) family.

It localises to the secreted. The protein is Proteinase inhibitor I-B (TIMPA) of Nicotiana tabacum (Common tobacco).